Here is a 510-residue protein sequence, read N- to C-terminus: NAD(P)H-quinone oxidoreductase subunit 2 B, chloroplastic (510 aa).

13 helical membrane passes run 24–44 (LLLFDGSFIFPECILIFGLIL), 57–77 (IPWLYFISSTSLVMSITALLF), 99–119 (IFQFLILLCSTLCIPLSVEYI), 124–144 (MAIAEFLLFVLTATLGGMFLC), 149–169 (LITIFVAPECFSLCSYLLSGY), 183–203 (YLLMGGASSSILVHGFSWLYG), 227–247 (PGISIALIFITVGIGFKLSPA), 295–315 (WHLLLEILAILSMILGNLIAI), 323–343 (MLAYSSIGQIGYVIIGIIVGN), 354–374 (YMLFYISMNLGTFACIVLFGL), 395–415 (ALSLAPCLLSLGGLPPLAGFF), 418–438 (LHLFWCGWQAGLYFLVSIGLL), and 484–504 (MIVCVIASTIPGISMNPIIAI).

Belongs to the complex I subunit 2 family. As to quaternary structure, NDH is composed of at least 16 different subunits, 5 of which are encoded in the nucleus.

It is found in the plastid. The protein resides in the chloroplast thylakoid membrane. It catalyses the reaction a plastoquinone + NADH + (n+1) H(+)(in) = a plastoquinol + NAD(+) + n H(+)(out). The enzyme catalyses a plastoquinone + NADPH + (n+1) H(+)(in) = a plastoquinol + NADP(+) + n H(+)(out). NDH shuttles electrons from NAD(P)H:plastoquinone, via FMN and iron-sulfur (Fe-S) centers, to quinones in the photosynthetic chain and possibly in a chloroplast respiratory chain. The immediate electron acceptor for the enzyme in this species is believed to be plastoquinone. Couples the redox reaction to proton translocation, and thus conserves the redox energy in a proton gradient. This chain is NAD(P)H-quinone oxidoreductase subunit 2 B, chloroplastic, found in Gossypium barbadense (Sea Island cotton).